The sequence spans 443 residues: Two-pore potassium channel 2 (443 aa).

Topologically, residues 1–144 (MANDGNGDNN…KTDQQSDSKT (144 aa)) are cytoplasmic. The disordered stretch occupies residues 67-109 (SLPIDALSQNPSTSSSATTSFSDSTDLLLPLTEPNKPVRKSKP). Residues 72–98 (ALSQNPSTSSSATTSFSDSTDLLLPLT) show a composition bias toward low complexity. Residues 145 to 165 (IVNQAVALLVVYLSLGVLIYW) form a helical membrane-spanning segment. Residues 181–200 (DALYFCIVTMCTIGYGDITP) constitute an intramembrane region (pore-forming). A helical membrane pass occupies residues 208–228 (FSIFFVLVGFGFMDILLSGMV). Residues 229–274 (TYVLDLQENYMLETARNESLNLNDRDKVRSYIIDVKKGRMRIRLKV) lie on the Cytoplasmic side of the membrane. Residues 275–295 (GLALGVVVLCLGFGVLIMHFV) traverse the membrane as a helical segment. Residues 302–321 (DSFYFSVMSVTTVGYGDRAF) constitute an intramembrane region (pore-forming). Residues 328 to 348 (LLAAMWLLVSTLAVARAILFL) form a helical membrane-spanning segment. At 349-443 (AESRVDKRNR…TKDLPTATSI (95 aa)) the chain is on the cytoplasmic side. EF-hand domains are found at residues 365–400 (LGES…KMDK) and 404–439 (KDIN…DLPT). 9 residues coordinate Ca(2+): Asp-378, Asp-380, Asn-382, Cys-384, Glu-389, Asp-417, Ser-421, Arg-423, and Asp-428.

The protein belongs to the two pore domain potassium channel (TC 1.A.1.7) family. As to quaternary structure, homodimer. In terms of tissue distribution, expressed in roots, stems, leaves and flowers.

The protein resides in the vacuole membrane. Its function is as follows. Probable voltage-independent potassium-selective tonoplast ion channel. This Arabidopsis thaliana (Mouse-ear cress) protein is Two-pore potassium channel 2 (TPK2).